A 416-amino-acid chain; its full sequence is 4-hydroxy-3-methylbut-2-en-1-yl diphosphate synthase (flavodoxin) (416 aa).

4 residues coordinate [4Fe-4S] cluster: Cys-304, Cys-307, Cys-350, and Glu-357.

It belongs to the IspG family. [4Fe-4S] cluster is required as a cofactor.

The enzyme catalyses (2E)-4-hydroxy-3-methylbut-2-enyl diphosphate + oxidized [flavodoxin] + H2O + 2 H(+) = 2-C-methyl-D-erythritol 2,4-cyclic diphosphate + reduced [flavodoxin]. It functions in the pathway isoprenoid biosynthesis; isopentenyl diphosphate biosynthesis via DXP pathway; isopentenyl diphosphate from 1-deoxy-D-xylulose 5-phosphate: step 5/6. In terms of biological role, converts 2C-methyl-D-erythritol 2,4-cyclodiphosphate (ME-2,4cPP) into 1-hydroxy-2-methyl-2-(E)-butenyl 4-diphosphate. The polypeptide is 4-hydroxy-3-methylbut-2-en-1-yl diphosphate synthase (flavodoxin) (Rhizobium johnstonii (strain DSM 114642 / LMG 32736 / 3841) (Rhizobium leguminosarum bv. viciae)).